Reading from the N-terminus, the 297-residue chain is Proline iminopeptidase (297 aa).

Residues 26–131 enclose the AB hydrolase-1 domain; it reads VLLLHGGPAM…GLLVSNMMAS (106 aa). Ser-103 serves as the catalytic Nucleophile. Asp-243 is a catalytic residue. The Proton donor role is filled by His-270.

This sequence belongs to the peptidase S33 family. In terms of assembly, monomer.

It carries out the reaction Release of N-terminal proline from a peptide.. Its function is as follows. Releases the N-terminal proline from various substrates. The sequence is that of Proline iminopeptidase (fpaP) from Flavobacterium johnsoniae (strain ATCC 17061 / DSM 2064 / JCM 8514 / BCRC 14874 / CCUG 350202 / NBRC 14942 / NCIMB 11054 / UW101) (Cytophaga johnsonae).